The sequence spans 251 residues: Hydroxyacylglutathione hydrolase (251 aa).

His53, His55, Asp57, His58, His110, Asp127, and His165 together coordinate Zn(2+).

Belongs to the metallo-beta-lactamase superfamily. Glyoxalase II family. Monomer. Requires Zn(2+) as cofactor.

The enzyme catalyses an S-(2-hydroxyacyl)glutathione + H2O = a 2-hydroxy carboxylate + glutathione + H(+). The protein operates within secondary metabolite metabolism; methylglyoxal degradation; (R)-lactate from methylglyoxal: step 2/2. Its function is as follows. Thiolesterase that catalyzes the hydrolysis of S-D-lactoyl-glutathione to form glutathione and D-lactic acid. This Escherichia coli (strain SMS-3-5 / SECEC) protein is Hydroxyacylglutathione hydrolase.